A 734-amino-acid polypeptide reads, in one-letter code: ATP-dependent RNA helicase SUV3L, mitochondrial (734 aa).

The transit peptide at 1 to 60 directs the protein to the mitochondrion; the sequence is MAAAAAIAAALLRRSTSSQHHRRILLLPLLSHLQRAAPRSPSPWDPPPHHRFFFSSDVTA. The disordered stretch occupies residues 58 to 88; the sequence is VTAEGDSKPRPPLDGKQLWREVSTSEPATGA. The span at 62-76 shows a compositional bias: basic and acidic residues; sequence GDSKPRPPLDGKQLW. The 159-residue stretch at 198–356 folds into the Helicase ATP-binding domain; sequence FARAMRRRVV…RFKPLVVEAK (159 aa). ATP is bound at residue 211 to 218; the sequence is GPTNSGKT. Positions 357–525 constitute a Helicase C-terminal domain; the sequence is TLLGDLKNVR…SFAIQFPDLT (169 aa). Residues N594 and N614 are each glycosylated (N-linked (GlcNAc...) asparagine). A disordered region spans residues 667–734; that stretch reads ASWKPTSRQQ…QDPSSLNFVA (68 aa). The segment covering 684–693 has biased composition (acidic residues); it reads EEDNDVEQAS. Basic and acidic residues predominate over residues 695 to 709; it reads DNAKNDSEDGYERSI. N699 carries an N-linked (GlcNAc...) asparagine glycan. Residues 725–734 show a composition bias toward polar residues; it reads QDPSSLNFVA.

Belongs to the helicase family. Homodimer; in free form. Component of the mitochondrial degradosome (mtEXO) complex which is a heteropentamer containing 2 copies of SUPV3L1 and 3 copies of PNPT1. Requires Mg(2+) as cofactor. The cofactor is Mn(2+).

It is found in the nucleus. The protein resides in the mitochondrion matrix. The protein localises to the mitochondrion nucleoid. It carries out the reaction ATP + H2O = ADP + phosphate + H(+). Its function is as follows. Major helicase player in mitochondrial RNA metabolism. Component of the mitochondrial degradosome (mtEXO) complex, that degrades 3' overhang double-stranded RNA with a 3'-to-5' directionality in an ATP-dependent manner. ATPase and ATP-dependent multisubstrate helicase, able to unwind double-stranded (ds) DNA and RNA, and RNA/DNA heteroduplexes in the 5'-to-3' direction. Plays a role in the RNA surveillance system in mitochondria; regulates the stability of mature mRNAs, the removal of aberrantly formed mRNAs and the rapid degradation of non coding processing intermediates. Confers salinity and drought stress tolerances by maintaining both photosynthesis and antioxidant machinery, probably via an increase in plant hormones levels such as gibberellic acid (GA(3)), the cytokinin zeatin (Z) and indole-3-acetic acid (IAA). The chain is ATP-dependent RNA helicase SUV3L, mitochondrial from Oryza sativa subsp. japonica (Rice).